The primary structure comprises 314 residues: Protein REGULATOR OF FATTY ACID COMPOSITION 3, chloroplastic (314 aa).

A chloroplast-targeting transit peptide spans 1-47 (MESLLHASSSLVSLRPRIDGRDSFINPSRVCLNPSLGRRGSKPLPLV). 2 disordered regions span residues 49 to 73 (AAKKKKSKKDDNHNFSARPDEATGP) and 214 to 314 (AITE…NVGG). The span at 56–69 (KKDDNHNFSARPDE) shows a compositional bias: basic and acidic residues. Composition is skewed to acidic residues over residues 233–269 (EYYDDDEEEEIEEDEDEGEGEDEEDADNIEYEVDDDG) and 277–294 (GDEEEGEEEEDGASEQEE). The segment covering 295-308 (GQDKSTNGRRETRR) has biased composition (basic and acidic residues).

The protein belongs to the bacterial ribosomal protein bS6 family. As to quaternary structure, interacts with CFM3B/SPRT2 in plastids. As to expression, expressed ubiquitously in roots, leaves, stems, flower buds, flowers and siliques.

The protein resides in the plastid. Its subcellular location is the chloroplast. Its function is as follows. Prevents non-specific action of the splicing factor CFM3b during plastid rRNA biogenesis to improve the accuracy of plastid rRNA processing. Required for plastid functions such as photosynthesis, intracellular distribution, plastid rRNAs biosynthesis and plastid gene expression in roots. Involved in a sucrose-conditional process important for the organization of root lateral and apical meristems (e.g. establishment of RAM from pericycle and symplasmic connectivity), and subsequent primary and lateral roots development. Modulates C18 unsaturated fatty acid metabolism. The sequence is that of Protein REGULATOR OF FATTY ACID COMPOSITION 3, chloroplastic from Arabidopsis thaliana (Mouse-ear cress).